A 294-amino-acid polypeptide reads, in one-letter code: Acetylglutamate kinase (294 aa).

Substrate-binding positions include 69–70 (GG), Arg91, and Asn190.

This sequence belongs to the acetylglutamate kinase family. ArgB subfamily.

The protein localises to the cytoplasm. The catalysed reaction is N-acetyl-L-glutamate + ATP = N-acetyl-L-glutamyl 5-phosphate + ADP. Its pathway is amino-acid biosynthesis; L-arginine biosynthesis; N(2)-acetyl-L-ornithine from L-glutamate: step 2/4. Functionally, catalyzes the ATP-dependent phosphorylation of N-acetyl-L-glutamate. In Mycobacterium bovis (strain ATCC BAA-935 / AF2122/97), this protein is Acetylglutamate kinase.